The primary structure comprises 373 residues: ATP-dependent 6-phosphofructokinase (373 aa).

ATP is bound by residues Gly-12, 74 to 75 (RD), and 110 to 113 (GGGT). Residues 133 to 135 (TID), Arg-170, 177 to 179 (MGH), Glu-230, Arg-291, and 297 to 300 (YVQR) each bind substrate. The active-site Proton acceptor is Asp-135.

The protein belongs to the phosphofructokinase type A (PFKA) family. Mixed-substrate PFK group III subfamily. As to quaternary structure, homodimer or homotetramer. Mg(2+) serves as cofactor.

It is found in the cytoplasm. It catalyses the reaction beta-D-fructose 6-phosphate + ATP = beta-D-fructose 1,6-bisphosphate + ADP + H(+). Its pathway is carbohydrate degradation; glycolysis; D-glyceraldehyde 3-phosphate and glycerone phosphate from D-glucose: step 3/4. Functionally, catalyzes the phosphorylation of D-fructose 6-phosphate to fructose 1,6-bisphosphate by ATP, the first committing step of glycolysis. This Propionibacterium freudenreichii subsp. shermanii (strain ATCC 9614 / DSM 4902 / CIP 103027 / NCIMB 8099 / CIRM-BIA1) protein is ATP-dependent 6-phosphofructokinase.